The sequence spans 66 residues: Large ribosomal subunit protein uL29 (66 aa).

It belongs to the universal ribosomal protein uL29 family.

The chain is Large ribosomal subunit protein uL29 from Bartonella henselae (strain ATCC 49882 / DSM 28221 / CCUG 30454 / Houston 1) (Rochalimaea henselae).